The chain runs to 558 residues: Dihydroxy-acid dehydratase (558 aa).

Aspartate 78 contacts Mg(2+). Cysteine 119 serves as a coordination point for [2Fe-2S] cluster. Aspartate 120 and lysine 121 together coordinate Mg(2+). N6-carboxylysine is present on lysine 121. Cysteine 192 is a binding site for [2Fe-2S] cluster. Residue glutamate 446 participates in Mg(2+) binding. Serine 472 acts as the Proton acceptor in catalysis.

Belongs to the IlvD/Edd family. In terms of assembly, homodimer. It depends on [2Fe-2S] cluster as a cofactor. Mg(2+) serves as cofactor.

It catalyses the reaction (2R)-2,3-dihydroxy-3-methylbutanoate = 3-methyl-2-oxobutanoate + H2O. The catalysed reaction is (2R,3R)-2,3-dihydroxy-3-methylpentanoate = (S)-3-methyl-2-oxopentanoate + H2O. It participates in amino-acid biosynthesis; L-isoleucine biosynthesis; L-isoleucine from 2-oxobutanoate: step 3/4. Its pathway is amino-acid biosynthesis; L-valine biosynthesis; L-valine from pyruvate: step 3/4. Functionally, functions in the biosynthesis of branched-chain amino acids. Catalyzes the dehydration of (2R,3R)-2,3-dihydroxy-3-methylpentanoate (2,3-dihydroxy-3-methylvalerate) into 2-oxo-3-methylpentanoate (2-oxo-3-methylvalerate) and of (2R)-2,3-dihydroxy-3-methylbutanoate (2,3-dihydroxyisovalerate) into 2-oxo-3-methylbutanoate (2-oxoisovalerate), the penultimate precursor to L-isoleucine and L-valine, respectively. This chain is Dihydroxy-acid dehydratase, found in Campylobacter jejuni subsp. doylei (strain ATCC BAA-1458 / RM4099 / 269.97).